Here is a 416-residue protein sequence, read N- to C-terminus: 3-isopropylmalate dehydratase large subunit (416 aa).

[4Fe-4S] cluster-binding residues include Cys-297, Cys-357, and Cys-360.

Belongs to the aconitase/IPM isomerase family. LeuC type 2 subfamily. As to quaternary structure, heterodimer of LeuC and LeuD. [4Fe-4S] cluster is required as a cofactor.

The enzyme catalyses (2R,3S)-3-isopropylmalate = (2S)-2-isopropylmalate. It functions in the pathway amino-acid biosynthesis; L-leucine biosynthesis; L-leucine from 3-methyl-2-oxobutanoate: step 2/4. Catalyzes the isomerization between 2-isopropylmalate and 3-isopropylmalate, via the formation of 2-isopropylmaleate. The polypeptide is 3-isopropylmalate dehydratase large subunit (Methanoregula boonei (strain DSM 21154 / JCM 14090 / 6A8)).